Here is a 629-residue protein sequence, read N- to C-terminus: METVSVLLFFFLFLLAAEARSTKRTGCKDFTCGEHDFKFPFFRTDMPSRCGLFKLNCSANIPEIQLEKDGKWYTVKSVSQANTITIIDPRLNQSLTTGGCSDLSSFSLPDSPWLKLNTLYKCNNSSRKNGFSYANCRGEGSSLYYNLGDDHDVSGCSPIKTPESWVTPKNGNLSDVNATFSLHIELPGNCFRCHNNGGECTKVKNNYRCVGANTEPNNYHAEMRLGLGIGGSVILIIILVALFAVIHRNYRRKDGSELSRDNSKSDVEFSQVFFKIPIFSYKELQAATDNFSKDRLLGDGGFGTVYYGKVRDGREVAVKRLYEHNYRRLEQFMNEIEILTRLHHKNLVSLYGCTSRRSRELLLVYEFIPNGTVADHLYGENTPHQGFLTWSMRLSIAIETASALAYLHASDIIHRDVKTTNILLDRNFGVKVADFGLSRLLPSDVTHVSTAPQGTPGYVDPEYHRCYHLTDKSDVYSFGVVLVELISSKPAVDISRCKSEINLSSLAINKIQNHATHELIDQNLGYATNEGVRKMTTMVAELAFQCLQQDNTMRPTMEQVVHELKGIQNEEQKCPTYDYREETIIPHPSPPDWGEAALLKNMKFPRSPVSVTDQWTSKSTTPNTSAYEF.

Positions 1–19 (METVSVLLFFFLFLLAAEA) are cleaved as a signal peptide. Residues 20–225 (RSTKRTGCKD…PNNYHAEMRL (206 aa)) lie on the Extracellular side of the membrane. N-linked (GlcNAc...) asparagine glycosylation is found at Asn-56, Asn-92, Asn-123, Asn-124, Asn-172, and Asn-177. Residues 226–246 (GLGIGGSVILIIILVALFAVI) traverse the membrane as a helical segment. At 247–629 (HRNYRRKDGS…TTPNTSAYEF (383 aa)) the chain is on the cytoplasmic side. The Protein kinase domain occupies 291 to 565 (FSKDRLLGDG…TMEQVVHELK (275 aa)). Residues 297 to 305 (LGDGGFGTV) and Lys-319 each bind ATP. Tyr-365 carries the post-translational modification Phosphotyrosine. The active-site Proton acceptor is Asp-416. A Phosphoserine modification is found at Ser-449. Phosphothreonine is present on residues Thr-450 and Thr-455. Tyr-463 is subject to Phosphotyrosine. Residues 609-629 (VSVTDQWTSKSTTPNTSAYEF) form a disordered region.

The protein belongs to the protein kinase superfamily. Ser/Thr protein kinase family.

Its subcellular location is the cell membrane. The catalysed reaction is L-seryl-[protein] + ATP = O-phospho-L-seryl-[protein] + ADP + H(+). It carries out the reaction L-threonyl-[protein] + ATP = O-phospho-L-threonyl-[protein] + ADP + H(+). The chain is LEAF RUST 10 DISEASE-RESISTANCE LOCUS RECEPTOR-LIKE PROTEIN KINASE-like 1.1 from Arabidopsis thaliana (Mouse-ear cress).